The primary structure comprises 271 residues: Uridine-cytidine kinase 1-B (271 aa).

24–32 contributes to the ATP binding site; sequence GGTASGKST. Residues Asp81, Tyr109, His114, Arg163, Arg172, and Gln180 each coordinate substrate. Asp209 serves as a coordination point for ATP. Residues 240–271 are disordered; it reads RSQKRTLPGQGDSGGLLLQGKRTHLESSSRPH. Residues 246-259 show a composition bias toward low complexity; sequence LPGQGDSGGLLLQG. The segment covering 262 to 271 has biased composition (basic and acidic residues); sequence THLESSSRPH.

This sequence belongs to the uridine kinase family.

It carries out the reaction uridine + ATP = UMP + ADP + H(+). It catalyses the reaction cytidine + ATP = CMP + ADP + H(+). It participates in pyrimidine metabolism; CTP biosynthesis via salvage pathway; CTP from cytidine: step 1/3. It functions in the pathway pyrimidine metabolism; UMP biosynthesis via salvage pathway; UMP from uridine: step 1/1. Functionally, phosphorylates uridine and cytidine to uridine monophosphate and cytidine monophosphate. Does not phosphorylate deoxyribonucleosides or purine ribonucleosides. Can use ATP or GTP as a phosphate donor. In Xenopus laevis (African clawed frog), this protein is Uridine-cytidine kinase 1-B (uck1-b).